The sequence spans 292 residues: Large ribosomal subunit protein bL19m (292 aa).

Positions 39-68 (GPGRRQITGPSEPGVFQPPPKPVIVDKRGP) are disordered. Ser77 carries the post-translational modification Phosphoserine.

Belongs to the bacterial ribosomal protein bL19 family. In terms of assembly, component of the mitochondrial ribosome large subunit (39S) which comprises a 16S rRNA and about 50 distinct proteins.

The protein resides in the mitochondrion. This Bos taurus (Bovine) protein is Large ribosomal subunit protein bL19m (MRPL19).